Here is a 119-residue protein sequence, read N- to C-terminus: uncharacterized protein (119 aa).

2 consecutive transmembrane segments (helical) span residues 57–77 (FSHHLSILQSMCLHFIISILF) and 80–100 (YIFVFLFAFLLPSAFPLFILH).

The protein resides in the membrane. This is an uncharacterized protein from Saccharomyces cerevisiae (strain ATCC 204508 / S288c) (Baker's yeast).